Reading from the N-terminus, the 876-residue chain is Extended synaptotagmin-2-B (876 aa).

The disordered stretch occupies residues 1–21 (MASESGAEKGPPTTPAENGQP). At 1-35 (MASESGAEKGPPTTPAENGQPGVPIAAAVAADEQG) the chain is on the cytoplasmic side. Residues 36-56 (MISVDIAGLFYQFSKTFILIF) traverse the membrane as a helical segment. Residues 57–59 (PVY) lie on the Lumenal side of the membrane. A helical membrane pass occupies residues 60 to 80 (VLGYFGLSFSWLLIALVLLLW). The Cytoplasmic portion of the chain corresponds to 81-876 (WRRNKGNKNS…EDGTRAAASS (796 aa)). Residues 123-302 (DIERAEWLNK…LPNRITVPLV (180 aa)) enclose the SMP-LTD domain. 2 consecutive C2 domains span residues 301–421 (LVSD…DEWF) and 446–592 (NLDQ…HLNN). Lys-332, Asp-333, Asp-345, Asp-392, Glu-393, Asp-394, Asp-396, Asp-398, and Asp-399 together coordinate Ca(2+). The interval 614–714 (VRSPDEQHTS…KEPTPSIASD (101 aa)) is disordered. Residues 636 to 656 (PPTPQMPAPSPAVAHKPPPTP) show a composition bias toward pro residues. The span at 686 to 698 (SSSSLSGSSFTYS) shows a compositional bias: low complexity. Positions 741–863 (PLGQIQLTIR…DAAKGWTQWF (123 aa)) constitute a C2 3 domain. Residues 788 to 795 (KRRSGRRK) form a required for phosphatidylinositol 4,5-bisphosphate-dependent location at the cell membrane region.

The protein belongs to the extended synaptotagmin family. In terms of assembly, interacts with fgfr1 that has been activated by fgf1 binding. Interacts (via C2 domains) with the AP-2 complex (via an alpha subunit). Identified in a complex with the AP-2 complex and fgfr1.

The protein resides in the cell membrane. The protein localises to the endoplasmic reticulum membrane. Tethers the endoplasmic reticulum to the cell membrane and promotes the formation of appositions between the endoplasmic reticulum and the cell membrane. Binds glycerophospholipids in a barrel-like domain and may play a role in cellular lipid transport. Plays a role in the rapid internalization of fgfr1 that has been activated by fgf1 binding; this occurs most likely via the AP-2 complex. Required for normal fgf signaling and the activation of downstream signaling cascades via its role in the internalization of activated fgfr1. Required for normal embryonic development via its role in fgf signaling and the downstream regulation of t/xBRA expression. The protein is Extended synaptotagmin-2-B (esyt2-b) of Xenopus laevis (African clawed frog).